Here is a 572-residue protein sequence, read N- to C-terminus: NADH-ubiquinone oxidoreductase chain 5 (572 aa).

Transmembrane regions (helical) follow at residues 4 to 24, 44 to 64, 86 to 106, 107 to 127, 147 to 167, 170 to 190, 217 to 237, 239 to 259, 268 to 288, 294 to 314, 337 to 357, 372 to 394, 422 to 442, 457 to 477, 490 to 510, and 552 to 572; these read ISFV…LYFL, IVMT…VLMI, IMLV…PNLI, SILL…IYFQ, VALL…YIFY, IMQN…AAMT, SSTL…ILST, WLGQ…GLGA, IIAL…SMGF, FHLL…GAII, SACF…AGFY, NMFS…FRLV, MGLL…IFPF, LFVC…NLFF, FLGS…FYPL, and LKIY…LLFL.

This sequence belongs to the complex I subunit 5 family.

It localises to the mitochondrion inner membrane. The catalysed reaction is a ubiquinone + NADH + 5 H(+)(in) = a ubiquinol + NAD(+) + 4 H(+)(out). Functionally, core subunit of the mitochondrial membrane respiratory chain NADH dehydrogenase (Complex I) that is believed to belong to the minimal assembly required for catalysis. Complex I functions in the transfer of electrons from NADH to the respiratory chain. The immediate electron acceptor for the enzyme is believed to be ubiquinone. The polypeptide is NADH-ubiquinone oxidoreductase chain 5 (mt:ND5) (Drosophila melanogaster (Fruit fly)).